Here is an 802-residue protein sequence, read N- to C-terminus: Copal-8-ol diphosphate hydratase, chloroplastic (802 aa).

Residues 1–24 (MQVIITSSHRFFCHHLHQLKSPTS) constitute a chloroplast transit peptide. Position 249 (lysine 249) interacts with substrate. Positions 382 and 384 each coordinate Mg(2+). A DXDD motif motif is present at residues 382 to 385 (DVDD). A substrate-binding site is contributed by lysine 468.

It belongs to the terpene synthase family. It depends on Mg(2+) as a cofactor. As to expression, expressed specifically in the secretory cells of the glandular trichomes.

It localises to the plastid. It is found in the chloroplast. It carries out the reaction (2E,6E,10E)-geranylgeranyl diphosphate + H2O = 8-hydroxycopalyl diphosphate. It functions in the pathway secondary metabolite biosynthesis; terpenoid biosynthesis. In terms of biological role, class-II terpene synthase that synthesizes 8-hydroxy-copalyl diphosphate. Involved in the biosynthesis of cis-abienol, a labdane diterpene that can be used as synthesis precursor of ambergris substitution fragance products. This is Copal-8-ol diphosphate hydratase, chloroplastic from Nicotiana tabacum (Common tobacco).